The following is a 145-amino-acid chain: 3-dehydroquinate dehydratase (145 aa).

Y23 serves as the catalytic Proton acceptor. Residues N73, H79, and D86 each contribute to the substrate site. Residue H99 is the Proton donor of the active site. Residues 100–101 and R110 contribute to the substrate site; that span reads LS.

The protein belongs to the type-II 3-dehydroquinase family. In terms of assembly, homododecamer.

The enzyme catalyses 3-dehydroquinate = 3-dehydroshikimate + H2O. Its pathway is metabolic intermediate biosynthesis; chorismate biosynthesis; chorismate from D-erythrose 4-phosphate and phosphoenolpyruvate: step 3/7. Functionally, catalyzes a trans-dehydration via an enolate intermediate. This chain is 3-dehydroquinate dehydratase, found in Desulfitobacterium hafniense (strain DSM 10664 / DCB-2).